The sequence spans 370 residues: Aminomethyltransferase (370 aa).

This sequence belongs to the GcvT family. The glycine cleavage system is composed of four proteins: P, T, L and H.

It carries out the reaction N(6)-[(R)-S(8)-aminomethyldihydrolipoyl]-L-lysyl-[protein] + (6S)-5,6,7,8-tetrahydrofolate = N(6)-[(R)-dihydrolipoyl]-L-lysyl-[protein] + (6R)-5,10-methylene-5,6,7,8-tetrahydrofolate + NH4(+). In terms of biological role, the glycine cleavage system catalyzes the degradation of glycine. This is Aminomethyltransferase from Stenotrophomonas maltophilia (strain R551-3).